The following is a 339-amino-acid chain: 5-dehydro-2-deoxygluconokinase (339 aa).

It belongs to the carbohydrate kinase PfkB family.

It carries out the reaction 5-dehydro-2-deoxy-D-gluconate + ATP = 6-phospho-5-dehydro-2-deoxy-D-gluconate + ADP + H(+). It functions in the pathway polyol metabolism; myo-inositol degradation into acetyl-CoA; acetyl-CoA from myo-inositol: step 5/7. In terms of biological role, catalyzes the phosphorylation of 5-dehydro-2-deoxy-D-gluconate (2-deoxy-5-keto-D-gluconate or DKG) to 6-phospho-5-dehydro-2-deoxy-D-gluconate (DKGP). The sequence is that of 5-dehydro-2-deoxygluconokinase from Clostridium beijerinckii (strain ATCC 51743 / NCIMB 8052) (Clostridium acetobutylicum).